The sequence spans 234 residues: Cell polarity protein alp11 (234 aa).

Residues 4–88 (ITLFIKSSSA…IVVEDTRPPH (85 aa)) enclose the Ubiquitin-like domain. The CAP-Gly domain occupies 174-216 (VPEINNDNLWVGVEFDEPVGKNDGTVSGKRYFNAKNKHGSFLR). Serine 213 bears the Phosphoserine mark.

It belongs to the TBCB family. In terms of assembly, binds to monomeric alpha-tubulin. Interacts with alp21.

The protein resides in the cytoplasm. Its subcellular location is the cytoskeleton. Required for microtubule function and cell polarity. Involved in the proper folding of alpha-tubulin. The chain is Cell polarity protein alp11 (alp11) from Schizosaccharomyces pombe (strain 972 / ATCC 24843) (Fission yeast).